We begin with the raw amino-acid sequence, 239 residues long: Small ribosomal subunit protein uS2c (239 aa).

The protein belongs to the universal ribosomal protein uS2 family.

It localises to the plastid. It is found in the organellar chromatophore. This Paulinella chromatophora protein is Small ribosomal subunit protein uS2c (rps2).